The following is a 1165-amino-acid chain: Autophagy-related protein 11 (1165 aa).

Coiled coils occupy residues 239-304 (NKLN…YKNM) and 670-853 (DNIR…KQKK).

It belongs to the ATG11 family. Homodimer and potential homooligomers.

The protein localises to the preautophagosomal structure membrane. Functionally, plays an essential role in both non-selective and selective autophagy such as mitophagy. Recruits mitochondria for their selective degradation via autophagy (mitophagy) during starvation, through its interaction with ATG32. Works as scaffold proteins that recruit ATG proteins to the pre-autophagosome (PAS), the site of vesicle/autophagosome formation. Required for ATG9 anterograde transport from the mitochondria to the PAS. The polypeptide is Autophagy-related protein 11 (Candida albicans (strain SC5314 / ATCC MYA-2876) (Yeast)).